Reading from the N-terminus, the 636-residue chain is 1-deoxy-D-xylulose-5-phosphate synthase (636 aa).

Residues histidine 74 and 115 to 117 (GHA) each bind thiamine diphosphate. Residue aspartate 146 coordinates Mg(2+). Thiamine diphosphate is bound by residues 147-148 (GA), asparagine 175, tyrosine 285, and glutamate 368. Asparagine 175 serves as a coordination point for Mg(2+).

It belongs to the transketolase family. DXPS subfamily. As to quaternary structure, homodimer. The cofactor is Mg(2+). It depends on thiamine diphosphate as a cofactor.

The catalysed reaction is D-glyceraldehyde 3-phosphate + pyruvate + H(+) = 1-deoxy-D-xylulose 5-phosphate + CO2. It participates in metabolic intermediate biosynthesis; 1-deoxy-D-xylulose 5-phosphate biosynthesis; 1-deoxy-D-xylulose 5-phosphate from D-glyceraldehyde 3-phosphate and pyruvate: step 1/1. In terms of biological role, catalyzes the acyloin condensation reaction between C atoms 2 and 3 of pyruvate and glyceraldehyde 3-phosphate to yield 1-deoxy-D-xylulose-5-phosphate (DXP). This Anaeromyxobacter dehalogenans (strain 2CP-1 / ATCC BAA-258) protein is 1-deoxy-D-xylulose-5-phosphate synthase.